A 789-amino-acid chain; its full sequence is MTKDKEPIVKNFHLVCIVTLIVGTIIQFSDADEFAIDMSKTGLTHVPKDLPPKTKVLDMSQNYLSELQISDISFLSGLKILVLSHNRLQLLDLSVFKFNQDLEYLDLSHNQLKKMSCHPFVNLKHLDLSFNDFDSLPICKEFGNLTQLDFLGLSATKLQQLDLLPIAHLHLNCILLDLKGYYVKQNETESLQILNTKKLHLVFHTGSFFSVQVNMSVNTLGCLEMTNIKLNDKNCYFLMKFLLELTKGPSLLNFTLNHMETTWKCLVRVFQFLWTKPVEYLNIYNLTIVDDINKEYFIYCKTALKALKIEHITKTVFIFSWSSLYTLFSEMNIMMLSITDTPFIHMLCPKTRSTFKFLDFTQNVFTDSIFENCSTLVELETLILQKNGLKDLFKIGLMTKGMPSLEILDLSWNSLVFNRQRKCIWVGSILMLNMSSNLLTDLVFRCLPPRVTVLDLHNNRIMSIPKDVTSLETLQELNIAFNSLTDLPGCGTFSSLSVLIIDYNLISHPSTDFIQSCQNITSIKAGKNPFQCTCDLREFIKTISQMSSEVVKDWPDSYKCDYPESYKGTLLQDFHISQLSCSTSLLTVTIGATMLVLVVTVTFLCIYLDLPWYIRMVYQWTQTRRRARNIPLEELQRTLQFHAFISYSGHDSAWVKTELLPNLEKEDIQICLHERNFVPGKSIIENIINFIEKSYKSIFVLSPNFVQSEWCHYELYFAHHNLFHEAFDNLILILLEPIPQYSIPNNYHKLKSLIAQRTYLEWPKEKSKHGLFWANLRAAINIKLMEEKK.

An N-terminal signal peptide occupies residues 1 to 31 (MTKDKEPIVKNFHLVCIVTLIVGTIIQFSDA). The Extracellular portion of the chain corresponds to 32–587 (DEFAIDMSKT…QLSCSTSLLT (556 aa)). 19 LRR repeats span residues 54 to 77 (TKVL…FLSG), 78 to 101 (LKIL…FNQD), 102 to 122 (LEYL…PFVN), 123 to 147 (LKHL…NLTQ), 148 to 168 (LDFL…PIAH), 169 to 196 (LHLN…ILNT), 197 to 219 (KKLH…SVNT), 220 to 250 (LGCL…KGPS), 251 to 277 (LLNF…WTKP), 278 to 303 (VEYL…CKTA), 304 to 330 (LKAL…LFSE), 331 to 354 (MNIM…TRST), 355 to 378 (FKFL…TLVE), 379 to 404 (LETL…GMPS), 405 to 428 (LEIL…WVGS), 429 to 449 (ILML…CLPP), 450 to 473 (RVTV…SLET), 474 to 495 (LQEL…TFSS), and 496 to 519 (LSVL…SCQN). A disulfide bridge connects residues Cys-117 and Cys-139. An N-linked (GlcNAc...) asparagine glycan is attached at Asn-144. Residues Asn-186 and Asn-214 are each glycosylated (N-linked (GlcNAc...) asparagine). Cysteines 235 and 265 form a disulfide. 2 N-linked (GlcNAc...) asparagine glycosylation sites follow: Asn-253 and Asn-285. A disulfide bond links Cys-348 and Cys-373. Asn-372 carries an N-linked (GlcNAc...) asparagine glycan. An intrachain disulfide couples Cys-423 to Cys-446. Asn-433 is a glycosylation site (N-linked (GlcNAc...) asparagine). The N-linked (GlcNAc...) asparagine glycan is linked to Asn-519. The LRRCT domain occupies 520–575 (ITSIKAGKNPFQCTCDLREFIKTISQMSSEVVKDWPDSYKCDYPESYKGTLLQDFH). Residues 588–608 (VTIGATMLVLVVTVTFLCIYL) traverse the membrane as a helical segment. Residues 609–789 (DLPWYIRMVY…INIKLMEEKK (181 aa)) lie on the Cytoplasmic side of the membrane. The 142-residue stretch at 639-780 (LQFHAFISYS…LFWANLRAAI (142 aa)) folds into the TIR domain.

It belongs to the Toll-like receptor family. In terms of assembly, homodimer (via cytoplasmic TIR domain). Heterodimer with TLR2 via their respective extracellular domains. Binds MYD88 via their respective TIR domains. Interacts with CD36, following CD36 stimulation by oxLDL or amyloid-beta 42, and forms a heterodimer with TLR4. The trimeric complex is internalized and triggers inflammatory response. LYN kinase activity facilitates TLR4:TLR6 heterodimerization and signal initiation. The heterodimer TLR2:TLR6 interacts with CD14 and CD36 in response to triacylated lipopeptides.

It localises to the cell membrane. It is found in the cytoplasmic vesicle. The protein resides in the phagosome membrane. Its subcellular location is the membrane raft. The protein localises to the golgi apparatus. Its function is as follows. Participates in the innate immune response to Gram-positive bacteria and fungi. Specifically recognizes diacylated and, to a lesser extent, triacylated lipopeptides. In response to diacylated lipopeptides, forms the activation cluster TLR2:TLR6:CD14:CD36, this cluster triggers signaling from the cell surface and subsequently is targeted to the Golgi in a lipid-raft dependent pathway. Acts via MYD88 and TRAF6, leading to NF-kappa-B activation, cytokine secretion and the inflammatory response. Recognizes mycoplasmal macrophage-activating lipopeptide-2kD (MALP-2), soluble tuberculosis factor (STF), phenol-soluble modulin (PSM) and B.burgdorferi outer surface protein A lipoprotein (OspA-L) cooperatively with TLR2. In complex with TLR4, promotes sterile inflammation in monocytes/macrophages in response to oxidized low-density lipoprotein (oxLDL) or amyloid-beta 42. In this context, the initial signal is provided by oxLDL- or amyloid-beta 42-binding to CD36. This event induces the formation of a heterodimer of TLR4 and TLR6, which is rapidly internalized and triggers inflammatory response, leading to the NF-kappa-B-dependent production of CXCL1, CXCL2 and CCL9 cytokines, via MYD88 signaling pathway, and CCL5 cytokine, via TICAM1 signaling pathway, as well as IL1B secretion. This Dasypus novemcinctus (Nine-banded armadillo) protein is Toll-like receptor 6 (TLR6).